The primary structure comprises 185 residues: Recombination protein RecR (185 aa).

The C4-type zinc-finger motif lies at 44–59 (CSVCFHLSSEPVCEIC). One can recognise a Toprim domain in the interval 67–161 (NTICVVADSR…KVTRIAFGLP (95 aa)).

Belongs to the RecR family.

Functionally, may play a role in DNA repair. It seems to be involved in an RecBC-independent recombinational process of DNA repair. It may act with RecF and RecO. The protein is Recombination protein RecR of Trichormus variabilis (strain ATCC 29413 / PCC 7937) (Anabaena variabilis).